Consider the following 156-residue polypeptide: Baculoviral IAP repeat-containing protein 5.2 (156 aa).

One copy of the BIR repeat lies at 30–100; the sequence is RLSTFANWPF…KHSPSCLFIA (71 aa). Thr46 bears the Phosphothreonine; by CDK1 mark. The Zn(2+) site is built by Cys69, Cys72, His89, and Cys96.

Belongs to the IAP family. In terms of assembly, component of the CPC at least composed of survivin/birc5, incenp, cdca8/borealin and/or cdca9/dasra-A, and aurkb/aurora-B. Interacts directly with incenp (via N-terminus). Interacts with rxra; the interaction is stronger in the absence of 9-cis retinoic acids. Post-translationally, ubiquitination is required for centrosome-targeting.

It localises to the cytoplasm. It is found in the nucleus. The protein resides in the chromosome. Its subcellular location is the centromere. The protein localises to the cytoskeleton. It localises to the spindle. In terms of biological role, component of the chromosomal passenger complex (CPC), a complex that acts as a key regulator of mitosis. The CPC complex has essential functions at the centromere in ensuring correct chromosome alignment and segregation and is required for chromatin-induced microtubule stabilization and spindle assembly. Does not appear to exhibit anti-apoptotic activity. Plays a role in increasing blood vessel size during development. This chain is Baculoviral IAP repeat-containing protein 5.2 (birc5.2), found in Xenopus tropicalis (Western clawed frog).